Here is a 149-residue protein sequence, read N- to C-terminus: Deoxyuridine 5'-triphosphate nucleotidohydrolase (149 aa).

Substrate contacts are provided by residues 68-70 (RSG), asparagine 81, 85-87 (LID), and methionine 95.

Belongs to the dUTPase family. Mg(2+) is required as a cofactor.

The catalysed reaction is dUTP + H2O = dUMP + diphosphate + H(+). Its pathway is pyrimidine metabolism; dUMP biosynthesis; dUMP from dCTP (dUTP route): step 2/2. This enzyme is involved in nucleotide metabolism: it produces dUMP, the immediate precursor of thymidine nucleotides and it decreases the intracellular concentration of dUTP so that uracil cannot be incorporated into DNA. This chain is Deoxyuridine 5'-triphosphate nucleotidohydrolase, found in Albidiferax ferrireducens (strain ATCC BAA-621 / DSM 15236 / T118) (Rhodoferax ferrireducens).